Consider the following 160-residue polypeptide: Triabin (160 aa).

Residues M1 to A18 form the signal peptide. 3 cysteine pairs are disulfide-bonded: C24/C128, C57/C160, and C87/C102.

This sequence belongs to the calycin superfamily. Triabin family. In terms of tissue distribution, expressed in salivary glands.

The protein resides in the secreted. In terms of biological role, thrombin inhibitor. Forms a non-covalent complex with thrombin at a molar ratio of 1:1. Inhibits thrombin-induced platelet aggregation. Prolongs thrombin clotting time and activated partial thromboplastin time. It only minimally suppresses the amidolytic activity of thrombin. Inhibits thrombin-mediated fibrin formation in the host. Inhibits thrombin-induced endothelium-dependent relaxant and contractile responses in host blood vessels. Inhibits thrombin-induced mitogenesis in host vascular smooth muscle cells. This is Triabin from Meccus pallidipennis (Triatomine bug).